Consider the following 288-residue polypeptide: Protease HtpX (288 aa).

2 helical membrane-spanning segments follow: residues 5–25 (IALF…VMSL) and 34–54 (SGLL…SLLL). Position 140 (histidine 140) interacts with Zn(2+). Glutamate 141 is a catalytic residue. Residue histidine 144 participates in Zn(2+) binding. Helical transmembrane passes span 155–175 (LLQG…GGII) and 190–210 (FAYF…ATMI). Glutamate 219 lines the Zn(2+) pocket.

Belongs to the peptidase M48B family. Zn(2+) is required as a cofactor.

It localises to the cell inner membrane. This is Protease HtpX from Stenotrophomonas maltophilia (strain R551-3).